The following is a 359-amino-acid chain: Agropine synthesis conjugase (359 aa).

Positions 28–171 constitute an SIS domain; it reads TVAKFGRATA…IGGILNEREN (144 aa).

In Rhizobium rhizogenes (Agrobacterium rhizogenes), this protein is Agropine synthesis conjugase (mas2).